Consider the following 287-residue polypeptide: 3-methyl-2-oxobutanoate hydroxymethyltransferase (287 aa).

Residues 1 to 19 (MSTLPKTLTLDTSTSRANP) are compositionally biased toward polar residues. The segment at 1-24 (MSTLPKTLTLDTSTSRANPTPQPM) is disordered. Residues Asp66 and Asp105 each coordinate Mg(2+). 3-methyl-2-oxobutanoate-binding positions include 66–67 (DS), Asp105, and Lys135. Glu137 provides a ligand contact to Mg(2+). The active-site Proton acceptor is Glu204.

The protein belongs to the PanB family. Homodecamer; pentamer of dimers. The cofactor is Mg(2+).

It is found in the cytoplasm. It carries out the reaction 3-methyl-2-oxobutanoate + (6R)-5,10-methylene-5,6,7,8-tetrahydrofolate + H2O = 2-dehydropantoate + (6S)-5,6,7,8-tetrahydrofolate. It participates in cofactor biosynthesis; (R)-pantothenate biosynthesis; (R)-pantoate from 3-methyl-2-oxobutanoate: step 1/2. Functionally, catalyzes the reversible reaction in which hydroxymethyl group from 5,10-methylenetetrahydrofolate is transferred onto alpha-ketoisovalerate to form ketopantoate. This Sphingopyxis alaskensis (strain DSM 13593 / LMG 18877 / RB2256) (Sphingomonas alaskensis) protein is 3-methyl-2-oxobutanoate hydroxymethyltransferase.